Reading from the N-terminus, the 466-residue chain is Putative proline/betaine transporter (466 aa).

A run of 12 helical transmembrane segments spans residues 20-42 (VVAT…YTTA), 63-83 (FAAL…FGII), 91-111 (VVLT…GLLP), 116-136 (IGLW…FSTG), 164-184 (IGTL…TFFL), 191-211 (SFGW…GLYL), 239-259 (IIRF…FFNV), 285-305 (VLIT…GKLA), 313-332 (VFLI…FMLL), 337-354 (FVVI…LSTY), 377-397 (VTFN…ATWL), and 405-425 (LAPA…ITFL).

It belongs to the major facilitator superfamily. Metabolite:H+ Symporter (MHS) family (TC 2.A.1.6) family.

Its subcellular location is the cell membrane. May be a proton symporter involved in the uptake of osmolytes such as proline and glycine betaine. The protein is Putative proline/betaine transporter (proP) of Staphylococcus aureus (strain MSSA476).